The primary structure comprises 588 residues: MPQLGGGGGGGGGGSGGGGGSSAGAAGGGDDLGANDELIPFQDEGGEEQEPSSDSASAQRDLDEVKSSLVNESENQSSSSDSEAERRPQPVRDTFQKPRDYFAEVRRPQDSAFFKGPPYPGYPFLMIPDLSSPYLSNGPLSPGGARTYLQMKWPLLDVPSSATVKDTRSPSPAHLSNKVPVVQHPHHMHPLTPLITYSNDHFSPGSPPTHLSPEIDPKTGIPRPPHPSELSPYYPLSPGAVGQIPHPLGWLVPQQGQPMYSLPPGGFRHPYPALAMNASMSSLVSSRFSPHMVAPAHPGLPTSGIPHPAIVSPIVKQEPAPPSLSPAVSVKSPVTVKKEEEKKPHVKKPLNAFMLYMKEMRAKVVAECTLKESAAINQILGRKWHNLSREEQAKYYELARKERQLHSQLYPTWSARDNYGKKKKRKREKQLSQTQSQQQVQEAEGALASKSKKPCVQYLPPEKPCDSPASSHGSMLDSPATPSAALASPAAPAATHSEQAQPLSLTTKPETRAQLALHSAAFLSAKAAASSSGQMGSQPPLLSRPLPLGSMPTALLASPPSFPATLHAHQALPVLQAQPLSLVTKSAH.

Gly residues predominate over residues 1-31 (MPQLGGGGGGGGGGSGGGGGSSAGAAGGGDD). The segment at 1–74 (MPQLGGGGGG…VKSSLVNESE (74 aa)) is CTNNB1-binding. 3 disordered regions span residues 1-101 (MPQL…PRDY), 203-234 (SPGSPPTHLSPEIDPKTGIPRPPHPSELSPYY), and 409-506 (LYPT…LSLT). A compositionally biased stretch (low complexity) spans 67–81 (SSLVNESENQSSSSD). Residues 83–101 (EAERRPQPVRDTFQKPRDY) are compositionally biased toward basic and acidic residues. Positions 346–414 (VKKPLNAFML…LHSQLYPTWS (69 aa)) form a DNA-binding region, HMG box. The Nuclear localization signal signature appears at 421 to 427 (KKKKRKR). Composition is skewed to low complexity over residues 431–441 (LSQTQSQQQVQ) and 478–497 (SPATPSAALASPAAPAATHS).

It belongs to the TCF/LEF family. As to quaternary structure, binds the armadillo repeat of CTNNB1 and forms a stable complex. Interacts with DAZAP2. As to expression, detected in hair follicles and skin keratinocytes, and at lower levels in stomach epithelium.

It localises to the nucleus. In terms of biological role, participates in the Wnt signaling pathway. Binds to DNA and acts as a repressor in the absence of CTNNB1, and as an activator in its presence. Necessary for the terminal differentiation of epidermal cells, the formation of keratohyalin granules and the development of the barrier function of the epidermis. Down-regulates NQO1, leading to increased mitomycin c resistance. In Homo sapiens (Human), this protein is Transcription factor 7-like 1 (TCF7L1).